The primary structure comprises 621 residues: Chaperone protein HscA homolog (621 aa).

The protein belongs to the heat shock protein 70 family.

Chaperone involved in the maturation of iron-sulfur cluster-containing proteins. Has a low intrinsic ATPase activity which is markedly stimulated by HscB. This Pseudomonas fluorescens (strain Pf0-1) protein is Chaperone protein HscA homolog.